A 459-amino-acid chain; its full sequence is Cysteine--tRNA ligase (459 aa).

Zn(2+) is bound at residue C28. The 'HIGH' region motif lies at V30–H40. Positions 209, 234, and 238 each coordinate Zn(2+). A 'KMSKS' region motif is present at residues K266 to S270. An ATP-binding site is contributed by K269.

This sequence belongs to the class-I aminoacyl-tRNA synthetase family. Monomer. Zn(2+) serves as cofactor.

The protein resides in the cytoplasm. The enzyme catalyses tRNA(Cys) + L-cysteine + ATP = L-cysteinyl-tRNA(Cys) + AMP + diphosphate. This is Cysteine--tRNA ligase from Shewanella baltica (strain OS155 / ATCC BAA-1091).